The primary structure comprises 284 residues: L-ribulose-5-phosphate 3-epimerase UlaE (284 aa).

Belongs to the L-ribulose-5-phosphate 3-epimerase family.

The enzyme catalyses L-ribulose 5-phosphate = L-xylulose 5-phosphate. It functions in the pathway cofactor degradation; L-ascorbate degradation; D-xylulose 5-phosphate from L-ascorbate: step 3/4. Functionally, catalyzes the isomerization of L-xylulose-5-phosphate to L-ribulose-5-phosphate. Is involved in the anaerobic L-ascorbate utilization. This chain is L-ribulose-5-phosphate 3-epimerase UlaE, found in Salmonella dublin (strain CT_02021853).